A 593-amino-acid polypeptide reads, in one-letter code: uncharacterized protein (593 aa).

Helical transmembrane passes span 21 to 41, 60 to 80, 97 to 117, 148 to 168, 204 to 224, 243 to 263, 275 to 295, 328 to 348, 359 to 379, 410 to 430, 457 to 477, and 485 to 505; these read PAVFIPASVVIVAMIVVSVVY, VGWWYILVATGFVVFALYCGI, FSFWAWLAMLFSAGMGIGLVF, MALTVFHWGLHAWAIYVVVGL, VDVIAIVGTLFGVATSLGFGI, WMVGMIAAITATATASVVSGV, MALAAALALFVLLLGPTLFLL, WTIFYWGWWISWAPFVGMFIA, FIGAVLLVPTVIASLWFTIFG, GLPIGAITSVLAVLVIVFFFV, VYWAVLEGVAAAVLLLIGGAG, and AAIATALPFSIVMVVACYAMT.

It belongs to the BCCT transporter (TC 2.A.15) family.

It is found in the cell membrane. This is an uncharacterized protein from Mycobacterium tuberculosis (strain CDC 1551 / Oshkosh).